Consider the following 523-residue polypeptide: Bifunctional purine biosynthesis protein PurH (523 aa).

In terms of domain architecture, MGS-like spans 1–145; that stretch reads MIKQALLSVS…KNHRDVTVIV (145 aa).

This sequence belongs to the PurH family.

The catalysed reaction is (6R)-10-formyltetrahydrofolate + 5-amino-1-(5-phospho-beta-D-ribosyl)imidazole-4-carboxamide = 5-formamido-1-(5-phospho-D-ribosyl)imidazole-4-carboxamide + (6S)-5,6,7,8-tetrahydrofolate. It carries out the reaction IMP + H2O = 5-formamido-1-(5-phospho-D-ribosyl)imidazole-4-carboxamide. It participates in purine metabolism; IMP biosynthesis via de novo pathway; 5-formamido-1-(5-phospho-D-ribosyl)imidazole-4-carboxamide from 5-amino-1-(5-phospho-D-ribosyl)imidazole-4-carboxamide (10-formyl THF route): step 1/1. It functions in the pathway purine metabolism; IMP biosynthesis via de novo pathway; IMP from 5-formamido-1-(5-phospho-D-ribosyl)imidazole-4-carboxamide: step 1/1. This is Bifunctional purine biosynthesis protein PurH from Cupriavidus pinatubonensis (strain JMP 134 / LMG 1197) (Cupriavidus necator (strain JMP 134)).